The chain runs to 196 residues: MADGQLPFPCSYPSRLRRDPFRDSPLSSRLLDDGFGMDPFPDDLTAPWPEWALPRLSSAWPGTLRSGMVPRGPTATARFGVPAEGRNPPPFPGEPWKVCVNVHSFKPEELMVKTKDGYVEVSGKHEEKQQEGGIVSKNFTKKIQLPAEVDPVTVFASLSPEGLLIIEAPQVPPYSPFGESSFNNELPQDNQEVTCS.

The tract at residues 1 to 28 (MADGQLPFPCSYPSRLRRDPFRDSPLSS) is disordered. A phosphoserine mark is found at Ser24 and Ser57. The residue at position 63 (Thr63) is a Phosphothreonine. Residues Arg71 and Arg78 each carry the asymmetric dimethylarginine modification. The sHSP domain maps to 74–185 (TATARFGVPA…PFGESSFNNE (112 aa)). The tract at residues 176-196 (PFGESSFNNELPQDNQEVTCS) is disordered. The segment covering 178-196 (GESSFNNELPQDNQEVTCS) has biased composition (polar residues).

It belongs to the small heat shock protein (HSP20) family. Monomer. Forms a ternary complex with BAG3 and HSPA1A. Component of the chaperone-assisted selective autophagy (CASA) complex consisting of BAG3, HSPA8/HSC70, HSPB8 and STUB1/CHIP. Interacts with HSPB1. Interacts with DNAJB6. Interacts with BAG3. Post-translationally, phosphorylated.

The protein localises to the cytoplasm. The protein resides in the nucleus. In terms of biological role, involved in the chaperone-assisted selective autophagy (CASA), a crucial process for protein quality control, particularly in mechanical strained cells and tissues such as muscle. Displays temperature-dependent chaperone activity. The chain is Heat shock protein beta-8 (Hspb8) from Rattus norvegicus (Rat).